The sequence spans 268 residues: Probable membrane transporter protein HI_0806 (268 aa).

A run of 8 helical transmembrane segments spans residues 6–26, 46–66, 79–99, 101–121, 147–167, 178–198, 212–232, and 248–268; these read IFIL…FGIG, VISA…LLFF, ILWS…SFYF, TAII…KTFL, GGGL…APLV, IAVY…YGYL, LGLN…MSFF, and LLAI…FVFH.

Belongs to the 4-toluene sulfonate uptake permease (TSUP) (TC 2.A.102) family.

It is found in the cell membrane. The polypeptide is Probable membrane transporter protein HI_0806 (Haemophilus influenzae (strain ATCC 51907 / DSM 11121 / KW20 / Rd)).